The chain runs to 232 residues: N-(5'-phosphoribosyl)anthranilate isomerase (232 aa).

The protein belongs to the TrpF family.

It carries out the reaction N-(5-phospho-beta-D-ribosyl)anthranilate = 1-(2-carboxyphenylamino)-1-deoxy-D-ribulose 5-phosphate. It functions in the pathway amino-acid biosynthesis; L-tryptophan biosynthesis; L-tryptophan from chorismate: step 3/5. In Lipomyces starkeyi (Oleaginous yeast), this protein is N-(5'-phosphoribosyl)anthranilate isomerase (TRP1).